A 71-amino-acid chain; its full sequence is Equinin B (71 aa).

The signal sequence occupies residues Met1–Gly11. Positions Gly46–Tyr71 are excised as a propeptide.

In terms of processing, contains 4 disulfide bonds.

The protein localises to the secreted. It is found in the target cell membrane. In terms of biological role, antimicrobial peptide with inhibitory activity against both Gram-positive and Gram-negative bacteria (E.coli (MIC=0.25 ug/ml), M.lysodeikticus (MIC=0.25 ug/ml), and V.alginolyticus (MIC=0.25 ug/ml)). Does not show hemolytic activity. The sequence is that of Equinin B from Actinia equina (Beadlet anemone).